The primary structure comprises 553 residues: Retrotransposon Gag-like protein 3 (553 aa).

A coiled-coil region spans residues 2-43 (VEDLAASYVTLKLENEILQAQVKRLMEENAALQAQIPELQKS). 2 disordered regions span residues 38-274 (PELQ…PLDP) and 474-514 (SGGV…EAER). A compositionally biased stretch (basic and acidic residues) spans 45–57 (AVKEHEPLRKPSE). Residues 58-73 (AQEPPESPEFPAARES) show a composition bias toward low complexity. Residues 87 to 113 (EPTKIREPREPSAISELREPPEIKEPQ) show a composition bias toward basic and acidic residues. A compositionally biased stretch (polar residues) spans 118–127 (TNESGESSAI). Over residues 132–147 (GSPEIKEPHLPPKSKE) the composition is skewed to basic and acidic residues. Polar residues predominate over residues 239–250 (QTVPEYQETSSQ). Residues 474-483 (SGGVDSSSSS) show a composition bias toward low complexity. The segment covering 495-507 (TENQPVQATSNRP) has biased composition (polar residues). Residues 523 to 537 (CLYCGHPGHFARDCP) form a CCHC-type zinc finger.

As to expression, expressed in embryonic myogenic progenitor cells, not expressed in adult and aged satellite cells.

It localises to the nucleus. May function as a transcriptional regulator. Plays a role in postnatal myogenesis, may be involved in the regulation of satellite cells self-renewal. This Mus musculus (Mouse) protein is Retrotransposon Gag-like protein 3.